Consider the following 149-residue polypeptide: 3-dehydroquinate dehydratase (149 aa).

The active-site Proton acceptor is tyrosine 26. Substrate-binding residues include asparagine 77, histidine 83, and aspartate 90. Catalysis depends on histidine 103, which acts as the Proton donor. Residues 104 to 105 (LS) and arginine 114 each bind substrate.

It belongs to the type-II 3-dehydroquinase family. As to quaternary structure, homododecamer.

The catalysed reaction is 3-dehydroquinate = 3-dehydroshikimate + H2O. It functions in the pathway metabolic intermediate biosynthesis; chorismate biosynthesis; chorismate from D-erythrose 4-phosphate and phosphoenolpyruvate: step 3/7. Its function is as follows. Catalyzes a trans-dehydration via an enolate intermediate. This chain is 3-dehydroquinate dehydratase, found in Aliivibrio salmonicida (strain LFI1238) (Vibrio salmonicida (strain LFI1238)).